Reading from the N-terminus, the 105-residue chain is Secreted effector protein PINE1 (105 aa).

Residues Met1–Ala21 form the signal peptide.

Interacts with Arabidopsis thaliana PGIP1.

Its subcellular location is the secreted. Its function is as follows. Effector protein required for full virulence. Directly interacts with and functionally inactivates PG-inhibiting proteins (PGIPs). PGIPs are a defense mechanism of infected plants, that inhibit the plant pathogens secreted polygalacturonases (PGs) used to degrade the plant cell wall. Excerts its function by interacting with host PGIPs to negate their polygalacturonase-inhibiting function via enhanced dissociation of PGIPs from PGs. The protein is Secreted effector protein PINE1 of Sclerotinia sclerotiorum (strain ATCC 18683 / 1980 / Ss-1) (White mold).